Here is a 397-residue protein sequence, read N- to C-terminus: (S)-8-oxocitronellyl enol synthase ISY2 (397 aa).

Residues 36–38 (TGL), 64–65 (RR), 82–83 (DV), 106–107 (TW), Q144, Y180, I207, and 214–216 (SMM) each bind NADP(+). Y180 is an active-site residue.

This sequence belongs to the short-chain dehydrogenases/reductases (SDR) family.

The enzyme catalyses (S)-8-oxocitronellyl enol + NADP(+) = (6E)-8-oxogeranial + NADPH + H(+). It catalyses the reaction (S)-8-oxocitronellyl enol + NAD(+) = (6E)-8-oxogeranial + NADH + H(+). Functionally, iridoid synthase that catalyzes the first step in generation of the iridoid ring scaffold using the linear monoterpene (6E)-8-oxogeranial as substrate. Iridoids comprise a large family of distinctive bicyclic monoterpenes that possess a wide range of pharmacological activities, including anticancer, anti-inflammatory, antifungal and antibacterial activities. Catalyzes the conversion of the linear monoterpene (6E)-8-oxogeranial to (S)-8-oxocitronellyl enol, a precursor of nepetalactones, which are metabolites that are both insect-repellent and have euphoric effect in cats. In Nepeta cataria (Catnip), this protein is (S)-8-oxocitronellyl enol synthase ISY2.